A 338-amino-acid polypeptide reads, in one-letter code: 1-aminocyclopropane-1-carboxylate deaminase (338 aa).

N6-(pyridoxal phosphate)lysine is present on Lys-51. The Nucleophile role is filled by Ser-78.

The protein belongs to the ACC deaminase/D-cysteine desulfhydrase family. As to quaternary structure, homotrimer. The cofactor is pyridoxal 5'-phosphate.

It carries out the reaction 1-aminocyclopropane-1-carboxylate + H2O = 2-oxobutanoate + NH4(+). Functionally, catalyzes a cyclopropane ring-opening reaction, the irreversible conversion of 1-aminocyclopropane-1-carboxylate (ACC) to ammonia and alpha-ketobutyrate. Allows growth on ACC as a nitrogen source. This Burkholderia pseudomallei (strain 1106a) protein is 1-aminocyclopropane-1-carboxylate deaminase.